Consider the following 287-residue polypeptide: AA9 family lytic polysaccharide monooxygenase D (287 aa).

Positions 1 to 17 (MKLSLLAAAAIAPMVSA) are cleaved as a signal peptide. H18 serves as a coordination point for Cu(2+). A disulfide bond links C67 and C189. H176 provides a ligand contact to O2. Position 186 (Y186) interacts with Cu(2+). N-linked (GlcNAc...) asparagine glycosylation is found at N220 and N250. Residues 239–287 (TGGSGSSTGSYNESNAEDSNEYPYQKESGTCQSNFYRREHARDFSHRRA) form a disordered region. Residues 274-287 (YRREHARDFSHRRA) are compositionally biased toward basic and acidic residues.

The protein belongs to the polysaccharide monooxygenase AA9 family. The cofactor is Cu(2+).

The protein localises to the secreted. It catalyses the reaction [(1-&gt;4)-beta-D-glucosyl]n+m + reduced acceptor + O2 = 4-dehydro-beta-D-glucosyl-[(1-&gt;4)-beta-D-glucosyl]n-1 + [(1-&gt;4)-beta-D-glucosyl]m + acceptor + H2O.. Lytic polysaccharide monooxygenase (LPMO) that depolymerizes crystalline and amorphous polysaccharides via the oxidation of scissile alpha- or beta-(1-4)-glycosidic bonds, yielding C1 oxidation products. Catalysis by LPMOs requires the reduction of the active-site copper from Cu(II) to Cu(I) by a reducing agent and H(2)O(2) or O(2) as a cosubstrate. Active on celluloseas as well as on the hemicellulose xyloglucan. Shows synergy with other hydrolases in degrading sorghum stover. The polypeptide is AA9 family lytic polysaccharide monooxygenase D (Emericella nidulans (strain FGSC A4 / ATCC 38163 / CBS 112.46 / NRRL 194 / M139) (Aspergillus nidulans)).